Reading from the N-terminus, the 386-residue chain is Ovalbumin (386 aa).

Glycine 2 carries the post-translational modification N-acetylglycine. The not cleaved signal peptide spans 22–48 (HHANENIFYSPFTIISALAMVYLGAKD). Serine 69 bears the Phosphoserine mark. The cysteines at positions 74 and 121 are disulfide-linked. Residues asparagine 293 and asparagine 312 are each glycosylated (N-linked (GlcNAc...) asparagine). The residue at position 345 (serine 345) is a Phosphoserine. An N-linked (GlcNAc...) asparagine glycan is attached at asparagine 372.

Belongs to the serpin family. Ov-serpin subfamily. The signal sequence is not cleaved. The functional signal for membrane translocation of ovalbumin becomes accessible when the nascent chain is 50 to 60 residues long. The hydrophobic sequence which lies between residues 27 and 43 folds back on the preceding residues to form an amphipathic hairpin structure which is the signal element recognized by the membrane. In terms of tissue distribution, major protein of egg white.

It localises to the secreted. Its function is as follows. Storage protein of egg white. Lack protease inhibitory activity. The sequence is that of Ovalbumin (SERPINB14) from Meleagris gallopavo (Wild turkey).